A 220-amino-acid chain; its full sequence is Fructose-6-phosphate aldolase (220 aa).

Lys85 serves as the catalytic Schiff-base intermediate with substrate.

The protein belongs to the transaldolase family. Type 3A subfamily. In terms of assembly, homodecamer.

The protein localises to the cytoplasm. It catalyses the reaction beta-D-fructose 6-phosphate = dihydroxyacetone + D-glyceraldehyde 3-phosphate. In terms of biological role, catalyzes the reversible formation of fructose 6-phosphate from dihydroxyacetone and D-glyceraldehyde 3-phosphate via an aldolization reaction. This Salmonella agona (strain SL483) protein is Fructose-6-phosphate aldolase.